Consider the following 347-residue polypeptide: Putative coenzyme F420-dependent oxidoreductase Rv3520c (347 aa).

The chain is Putative coenzyme F420-dependent oxidoreductase Rv3520c from Mycobacterium tuberculosis (strain ATCC 25618 / H37Rv).